Reading from the N-terminus, the 357-residue chain is U5 small nuclear ribonucleoprotein 40 kDa protein (357 aa).

K18 is covalently cross-linked (Glycyl lysine isopeptide (Lys-Gly) (interchain with G-Cter in SUMO2)). An Asymmetric dimethylarginine modification is found at R21. WD repeat units lie at residues 64 to 103, 107 to 146, 149 to 189, 191 to 230, 233 to 272, 283 to 322, and 325 to 357; these read GHEG…GNYA, GYSG…RVKR, GHTS…AIQT, QNTY…LTYT, GHAD…PKER, NFEK…ILYK, and GHAG…GEIQ. K270 participates in a covalent cross-link: Glycyl lysine isopeptide (Lys-Gly) (interchain with G-Cter in SUMO2).

In terms of assembly, component of the pre-catalytic and catalytic spliceosome complexes. Component of the postcatalytic spliceosome P complex. Part of the U5 snRNP complex. Interacts with PRPF8. Component of the U4/U6-U5 tri-snRNP complex composed of the U4, U6 and U5 snRNAs and at least PRPF3, PRPF4, PRPF6, PRPF8, PRPF31, SNRNP200, TXNL4A, WDR57, SNRNP40, DDX23, CD2BP2, PPIH, SNU13, EFTUD2, SART1 and USP39. Component of the minor spliceosome, which splices U12-type introns.

The protein localises to the nucleus. Required for pre-mRNA splicing as component of the activated spliceosome. Component of the U5 small nuclear ribonucleoprotein (snRNP) complex and the U4/U6-U5 tri-snRNP complex, building blocks of the spliceosome. As a component of the minor spliceosome, involved in the splicing of U12-type introns in pre-mRNAs. The chain is U5 small nuclear ribonucleoprotein 40 kDa protein (SNRNP40) from Pongo abelii (Sumatran orangutan).